Here is a 380-residue protein sequence, read N- to C-terminus: Probable pectin lyase A (380 aa).

The first 20 residues, 1-20 (MRYTSLFTAVTAALASTAAA), serve as a signal peptide directing secretion. Intrachain disulfides connect Cys-83-Cys-102 and Cys-92-Cys-226. Asn-129 is a glycosylation site (N-linked (GlcNAc...) asparagine). Arg-256 is an active-site residue. Cysteines 323 and 331 form a disulfide.

The protein belongs to the polysaccharide lyase 1 family.

Its subcellular location is the secreted. It carries out the reaction Eliminative cleavage of (1-&gt;4)-alpha-D-galacturonan methyl ester to give oligosaccharides with 4-deoxy-6-O-methyl-alpha-D-galact-4-enuronosyl groups at their non-reducing ends.. Its function is as follows. Pectinolytic enzymes consist of four classes of enzymes: pectin lyase, polygalacturonase, pectin methylesterase and rhamnogalacturonase. Among pectinolytic enzymes, pectin lyase is the most important in depolymerization of pectin, since it cleaves internal glycosidic bonds of highly methylated pectins. This is Probable pectin lyase A (pelA) from Aspergillus fumigatus (strain ATCC MYA-4609 / CBS 101355 / FGSC A1100 / Af293) (Neosartorya fumigata).